Reading from the N-terminus, the 301-residue chain is HTH-type transcriptional regulator AbaB (301 aa).

One can recognise an HTH lysR-type domain in the interval 1–58 (MDLALLRTFVTVHRAGSFTRAAALLGLSQPAVTSQIRTLERQLGRPLFLRQARGVTPT). A DNA-binding region (H-T-H motif) is located at residues 18–37 (FTRAAALLGLSQPAVTSQIR).

This sequence belongs to the LysR transcriptional regulatory family.

Its function is as follows. Putative regulator that may be involved in stimulating antibiotic production in S.antibioticus. The chain is HTH-type transcriptional regulator AbaB from Streptomyces antibioticus.